We begin with the raw amino-acid sequence, 322 residues long: Ribose 1,5-bisphosphate isomerase (322 aa).

Residues Arg20–Gly23 and Arg63 each bind substrate. Cys133 acts as the Proton acceptor in catalysis. Ser135 to Ala137 is a binding site for substrate. The active-site Proton donor is Asp202. Substrate-binding positions include Asn212–Lys213 and Lys238.

Belongs to the eIF-2B alpha/beta/delta subunits family. R15P isomerase subfamily. As to quaternary structure, homohexamer; trimer of dimers.

The catalysed reaction is alpha-D-ribose 1,5-bisphosphate = D-ribulose 1,5-bisphosphate. With respect to regulation, is highly activated in the presence of AMP, with an increase of &gt;40-fold in activity levels. Among other nucleotides, isomerase activity is slightly increased in the presence of GMP, but CMP, UMP, TMP, and NAD(+) have no effect; therefore, AMP is likely the major activator of R15P isomerase in vivo. To a lesser extent, various compounds with an adenosyl moiety, such as dAMP, adenosine, or methylthioadenosine, can also act as activators. The regulation of this enzyme by AMP prevents excess degradation of intracellular AMP by the archaeal AMP degradation pathway. Functionally, catalyzes the isomerization of ribose 1,5-bisphosphate (R15P) to ribulose 1,5-bisphosphate (RuBP), the CO(2) acceptor and substrate for RubisCO. Only accepts the alpha-anomer of D-ribose 1,5-bisphosphate as substrate, being inactive on the beta-anomer. Displays a strict substrate specificity, since other phosphorylated sugars such as R5P, ribose, G16P, G6P, G1P, FBP, F6P, and PRPP, are not substrates. Functions in an archaeal AMP degradation pathway, together with AMP phosphorylase and RubisCO. This Thermococcus kodakarensis (strain ATCC BAA-918 / JCM 12380 / KOD1) (Pyrococcus kodakaraensis (strain KOD1)) protein is Ribose 1,5-bisphosphate isomerase.